The following is a 295-amino-acid chain: N-acetylmuramic acid 6-phosphate etherase (295 aa).

The region spanning 53–216 (TTEQFKQGGR…STITMVGVGK (164 aa)) is the SIS domain. Catalysis depends on E81, which acts as the Proton donor. The active site involves E112.

Belongs to the GCKR-like family. MurNAc-6-P etherase subfamily. In terms of assembly, homodimer.

The enzyme catalyses N-acetyl-D-muramate 6-phosphate + H2O = N-acetyl-D-glucosamine 6-phosphate + (R)-lactate. It functions in the pathway amino-sugar metabolism; N-acetylmuramate degradation. Specifically catalyzes the cleavage of the D-lactyl ether substituent of MurNAc 6-phosphate, producing GlcNAc 6-phosphate and D-lactate. The sequence is that of N-acetylmuramic acid 6-phosphate etherase from Staphylococcus saprophyticus subsp. saprophyticus (strain ATCC 15305 / DSM 20229 / NCIMB 8711 / NCTC 7292 / S-41).